A 456-amino-acid chain; its full sequence is Cysteine synthase 2 (456 aa).

The helical transmembrane segment at 9-29 (VYGTVALTAAFAAGILVTLGF) threads the bilayer.

Belongs to the cysteine synthase/cystathionine beta-synthase family. Requires pyridoxal 5'-phosphate as cofactor.

Its subcellular location is the mitochondrion outer membrane. The catalysed reaction is O-acetyl-L-serine + hydrogen sulfide = L-cysteine + acetate. Putative cysteine synthase that catalyzes the conversion of O-acetyl-L-serine (OAS) into cysteine, the last step in the cysteine biosynthesis pathway. However, in contrast to cysteine synthase cys-17, this CS-like protein may not function in cysteine biosynthesis. This is Cysteine synthase 2 from Neurospora crassa (strain ATCC 24698 / 74-OR23-1A / CBS 708.71 / DSM 1257 / FGSC 987).